The primary structure comprises 380 residues: MAPNLRKSHPLLKMINNSLIDLPTPSNISAWWNFGSLLGICLMTQILTGLLLAMHYTADTTLAFSSVAHTCRNVQYGWLIRNLHANGASFFFICIYLHIGRGFYYGSYLYKETWNTGIILLLTLMATAFVGYVLPWGQMSFWGATVITNLFSAIPYIGQTLVEWAWGGFSVDNPTLTRFFALHFLLPFAIAGLTLIHLTFLHESGSNNPLGIMSNCDKIPFHPYFTLKDILGFTLMFLPLTSLALFSPNLLGDPENFTPANPLVTPPHIKPEWYFLFAYAILRSIPNKLGGVLALAASVLILFLSPFLHKAKQRTMTFRPLSQLLFWILVTNLFILTWVGSQPVEHPFIIIGQLASITYFTILLILFPVIGTLENKMLNY.

A run of 4 helical transmembrane segments spans residues 34–54 (FGSL…LLAM), 78–99 (WLIR…YLHI), 114–134 (WNTG…GYVL), and 179–199 (FFAL…IHLT). Heme b is bound by residues His-84 and His-98. Heme b is bound by residues His-183 and His-197. His-202 lines the a ubiquinone pocket. The next 4 membrane-spanning stretches (helical) occupy residues 227-247 (LKDI…ALFS), 289-309 (LGGV…PFLH), 321-341 (LSQL…WVGS), and 348-368 (FIII…ILFP).

Belongs to the cytochrome b family. The cytochrome bc1 complex contains 11 subunits: 3 respiratory subunits (MT-CYB, CYC1 and UQCRFS1), 2 core proteins (UQCRC1 and UQCRC2) and 6 low-molecular weight proteins (UQCRH/QCR6, UQCRB/QCR7, UQCRQ/QCR8, UQCR10/QCR9, UQCR11/QCR10 and a cleavage product of UQCRFS1). This cytochrome bc1 complex then forms a dimer. Heme b is required as a cofactor.

The protein localises to the mitochondrion inner membrane. In terms of biological role, component of the ubiquinol-cytochrome c reductase complex (complex III or cytochrome b-c1 complex) that is part of the mitochondrial respiratory chain. The b-c1 complex mediates electron transfer from ubiquinol to cytochrome c. Contributes to the generation of a proton gradient across the mitochondrial membrane that is then used for ATP synthesis. The protein is Cytochrome b (MT-CYB) of Daption capense (Cape petrel).